Consider the following 600-residue polypeptide: Sulfite reductase [NADPH] flavoprotein alpha-component (600 aa).

A Flavodoxin-like domain is found at 63-201; that stretch reads ITLISASQTG…AAQAWRQRVV (139 aa). FMN-binding positions include 69 to 74, 116 to 119, and 152 to 161; these read SQTGNA, STQG, and LGDTSYEHFC. The FAD-binding FR-type domain occupies 235 to 449; it reads ESPLTATLSV…IEHNDNFRLP (215 aa). FAD is bound by residues T323, A357, 387-390, 405-407, and 420-423; these read RLYS, TVG, and GGAS. Residues 520 to 521, 526 to 530, and D562 contribute to the NADP(+) site; these read SR and KIYVQ. Y600 contributes to the FAD binding site.

This sequence belongs to the NADPH-dependent sulphite reductase flavoprotein subunit CysJ family. In the N-terminal section; belongs to the flavodoxin family. It in the C-terminal section; belongs to the flavoprotein pyridine nucleotide cytochrome reductase family. Alpha(8)-beta(8). The alpha component is a flavoprotein, the beta component is a hemoprotein. The cofactor is FAD. FMN is required as a cofactor.

It carries out the reaction hydrogen sulfide + 3 NADP(+) + 3 H2O = sulfite + 3 NADPH + 4 H(+). It functions in the pathway sulfur metabolism; hydrogen sulfide biosynthesis; hydrogen sulfide from sulfite (NADPH route): step 1/1. Its function is as follows. Component of the sulfite reductase complex that catalyzes the 6-electron reduction of sulfite to sulfide. This is one of several activities required for the biosynthesis of L-cysteine from sulfate. The flavoprotein component catalyzes the electron flow from NADPH -&gt; FAD -&gt; FMN to the hemoprotein component. The chain is Sulfite reductase [NADPH] flavoprotein alpha-component from Cronobacter sakazakii (strain ATCC BAA-894) (Enterobacter sakazakii).